Consider the following 190-residue polypeptide: Holliday junction branch migration complex subunit RuvA (190 aa).

Positions 1-65 (MIGNLSGIVD…ENVAQLYGFI (65 aa)) are domain I. The domain II stretch occupies residues 66-143 (SKEEQQCLRL…KLEINNNNFH (78 aa)). Residues 144-147 (PINE) are flexible linker. Positions 147–190 (EDALSALINLGYEKMKAYDTIKKYRPNLDTKDIIRMALKELSIL) are domain III.

This sequence belongs to the RuvA family. Homotetramer. Forms an RuvA(8)-RuvB(12)-Holliday junction (HJ) complex. HJ DNA is sandwiched between 2 RuvA tetramers; dsDNA enters through RuvA and exits via RuvB. An RuvB hexamer assembles on each DNA strand where it exits the tetramer. Each RuvB hexamer is contacted by two RuvA subunits (via domain III) on 2 adjacent RuvB subunits; this complex drives branch migration. In the full resolvosome a probable DNA-RuvA(4)-RuvB(12)-RuvC(2) complex forms which resolves the HJ.

Its subcellular location is the cytoplasm. Its function is as follows. The RuvA-RuvB-RuvC complex processes Holliday junction (HJ) DNA during genetic recombination and DNA repair, while the RuvA-RuvB complex plays an important role in the rescue of blocked DNA replication forks via replication fork reversal (RFR). RuvA specifically binds to HJ cruciform DNA, conferring on it an open structure. The RuvB hexamer acts as an ATP-dependent pump, pulling dsDNA into and through the RuvAB complex. HJ branch migration allows RuvC to scan DNA until it finds its consensus sequence, where it cleaves and resolves the cruciform DNA. This Wolbachia pipientis wMel protein is Holliday junction branch migration complex subunit RuvA.